Consider the following 440-residue polypeptide: MKEINSLECQWESIDDNNDTTILGDDIYFDYIISQLDIHQNWSPDIRLIRYFRKFNKESFDKISDTEYINPSFFQQRDKRFYPLNDDFYHISTGGYGIVFKMDKYVVKFVYEPNKQYSPIDTTAEYTIPKFLYNNLKGDEKKLIVCAWAMGLNYKLTFLHRLYKRVLYMLLLIIQTIDNQRLNIHHFSHKYFLKSFNEKKSDIKFVKLLSYFYPIVVQSNINVINYFTHMFHFFEHEKRANYLYDRGNIIIFPLARFSSDKVTEQMAIELGFKSIVQYVKFIFLQISLLYIKIYELPCCDNFLHVDLKPDNILIFNSDCPITIKFKKYTYVFNEPIKACLNDFDFSQVANILNKKIKNSLKIEHNWYYDFHFFIHTLLRTYPEIESDKEFSDSLEDFIMCCTKNTCEKFRLKVSILHPISFLENLITKNIFSNWINGESC.

The Protein kinase domain maps to 85–440 (NDDFYHISTG…FSNWINGESC (356 aa)). ATP-binding positions include 91–99 (ISTGGYGIV) and Lys-115. Asp-306 acts as the Proton acceptor in catalysis.

It belongs to the protein kinase superfamily. Ser/Thr protein kinase family. Poxviruses subfamily. Phosphorylated in vivo. Autophosphorylated in vitro.

It localises to the host endoplasmic reticulum. The protein resides in the host endoplasmic reticulum-Golgi intermediate compartment. It catalyses the reaction L-seryl-[protein] + ATP = O-phospho-L-seryl-[protein] + ADP + H(+). The catalysed reaction is L-threonyl-[protein] + ATP = O-phospho-L-threonyl-[protein] + ADP + H(+). In terms of biological role, essential serine-protein kinase involved in the early stage of virion morphogenesis. The protein is Serine/threonine-protein kinase 2 (OPG054) of Sus scrofa (Pig).